The sequence spans 77 residues: Conotoxin Cl6.15 (77 aa).

An N-terminal signal peptide occupies residues 1 to 19 (MKLSVKFLLFLMILPLIAG). A propeptide spanning residues 20-37 (EDMSDNDAPKSVDVQRNV) is cleaved from the precursor. Disulfide bonds link Cys-49–Cys-61, Cys-55–Cys-66, and Cys-60–Cys-75.

It belongs to the conotoxin I1 superfamily. In terms of tissue distribution, expressed by the venom duct.

The protein resides in the secreted. The sequence is that of Conotoxin Cl6.15 from Californiconus californicus (California cone).